The primary structure comprises 397 residues: Teichoic acid D-alanine hydrolase (397 aa).

An N-terminal signal peptide occupies residues 1–23 (MKFNKVKLVIHACVLLFIIISIA).

Its subcellular location is the cell membrane. The enzyme catalyses [(4-D-Ala)-(2-GlcNAc)-Rib-ol-P]n-[Gro-P]m-beta-D-ManNAc-(1-&gt;4)-alpha-D-GlcNAc-P-peptidoglycan + n H2O = [(2-GlcNAc)-Rib-ol-P]n-[Gro-P]m-beta-D-ManNAc-(1-&gt;4)-alpha-D-GlcNAc-P-peptidoglycan + n D-alanine.. Catalyzes the liberation of D-alanyl moieties present on wall teichoic acid (WTA) and lipoteichoic acid (LTA). Affects the methicillin resistance level and autolysis in the presence of Triton X-100 as well as the cell wall structure. In Staphylococcus aureus (strain Mu50 / ATCC 700699), this protein is Teichoic acid D-alanine hydrolase (fmtA).